A 197-amino-acid chain; its full sequence is ATP synthase protein MI25 (197 aa).

Residues 30-50 (ISIYNEEMIVARCFIGFLIFS) form a helical membrane-spanning segment.

Belongs to the ATPase protein MI25 family. As to quaternary structure, F-type ATPases have 2 components, CF(1) - the catalytic core - and CF(0) - the membrane proton channel. CF(1) has five subunits: alpha(3), beta(3), gamma(1), delta(1), epsilon(1). CF(0) has three main subunits: a, b and c.

It localises to the mitochondrion membrane. Its function is as follows. This is one of the chains of the nonenzymatic component (CF(0) subunit) of the mitochondrial ATPase complex. This Oryza sativa subsp. indica (Rice) protein is ATP synthase protein MI25.